The primary structure comprises 419 residues: Fumarylacetoacetase (419 aa).

Serine 2 carries the post-translational modification N-acetylserine. Serine 92 carries the post-translational modification Phosphoserine. Aspartate 126 serves as a coordination point for Ca(2+). A substrate-binding site is contributed by tyrosine 128. Catalysis depends on histidine 133, which acts as the Proton acceptor. Arginine 142 provides a ligand contact to substrate. The Ca(2+) site is built by glutamate 199, glutamate 201, and aspartate 233. Aspartate 233 provides a ligand contact to Mg(2+). Residues glutamine 240 and tyrosine 244 each coordinate substrate. Mg(2+) is bound by residues lysine 253 and threonine 257. Serine 309 carries the phosphoserine modification. Threonine 350 contributes to the substrate binding site. Phosphotyrosine is present on tyrosine 395.

The protein belongs to the FAH family. As to quaternary structure, homodimer. Ca(2+) is required as a cofactor. Mg(2+) serves as cofactor. As to expression, mainly expressed in liver and kidney. Lower levels are also detected in many other tissues.

The enzyme catalyses 4-fumarylacetoacetate + H2O = acetoacetate + fumarate + H(+). It participates in amino-acid degradation; L-phenylalanine degradation; acetoacetate and fumarate from L-phenylalanine: step 6/6. The chain is Fumarylacetoacetase (FAH) from Homo sapiens (Human).